The following is a 146-amino-acid chain: Nucleoside diphosphate kinase (146 aa).

The ATP site is built by Lys-11, Phe-59, Arg-87, Thr-93, Arg-104, and Asn-114. His-117 acts as the Pros-phosphohistidine intermediate in catalysis.

This sequence belongs to the NDK family. In terms of assembly, homotetramer. It depends on Mg(2+) as a cofactor.

Its subcellular location is the cytoplasm. It catalyses the reaction a 2'-deoxyribonucleoside 5'-diphosphate + ATP = a 2'-deoxyribonucleoside 5'-triphosphate + ADP. The enzyme catalyses a ribonucleoside 5'-diphosphate + ATP = a ribonucleoside 5'-triphosphate + ADP. Its function is as follows. Major role in the synthesis of nucleoside triphosphates other than ATP. The ATP gamma phosphate is transferred to the NDP beta phosphate via a ping-pong mechanism, using a phosphorylated active-site intermediate. The polypeptide is Nucleoside diphosphate kinase (Anaeromyxobacter sp. (strain Fw109-5)).